We begin with the raw amino-acid sequence, 192 residues long: dTTP/UTP pyrophosphatase (192 aa).

Aspartate 70 serves as the catalytic Proton acceptor.

This sequence belongs to the Maf family. YhdE subfamily. A divalent metal cation is required as a cofactor.

The protein resides in the cytoplasm. It catalyses the reaction dTTP + H2O = dTMP + diphosphate + H(+). The catalysed reaction is UTP + H2O = UMP + diphosphate + H(+). In terms of biological role, nucleoside triphosphate pyrophosphatase that hydrolyzes dTTP and UTP. May have a dual role in cell division arrest and in preventing the incorporation of modified nucleotides into cellular nucleic acids. The polypeptide is dTTP/UTP pyrophosphatase (Clostridium perfringens (strain SM101 / Type A)).